Reading from the N-terminus, the 39-residue chain is Photosystem II reaction center protein L (39 aa).

The helical transmembrane segment at 18 to 38 threads the bilayer; that stretch reads SLYLGLLFVFVTGVLMSSYFF.

Belongs to the PsbL family. As to quaternary structure, PSII is composed of 1 copy each of membrane proteins PsbA, PsbB, PsbC, PsbD, PsbE, PsbF, PsbH, PsbI, PsbJ, PsbK, PsbL, PsbM, PsbT, PsbX, PsbY, PsbZ, Psb30/Ycf12, peripheral proteins PsbO, CyanoQ (PsbQ), PsbU, PsbV and a large number of cofactors. It forms dimeric complexes.

The protein resides in the cellular thylakoid membrane. In terms of biological role, one of the components of the core complex of photosystem II (PSII). PSII is a light-driven water:plastoquinone oxidoreductase that uses light energy to abstract electrons from H(2)O, generating O(2) and a proton gradient subsequently used for ATP formation. It consists of a core antenna complex that captures photons, and an electron transfer chain that converts photonic excitation into a charge separation. This subunit is found at the monomer-monomer interface and is required for correct PSII assembly and/or dimerization. The chain is Photosystem II reaction center protein L from Parasynechococcus marenigrum (strain WH8102).